Consider the following 285-residue polypeptide: MSLETLPTLREALEAHGLWAKKAFGQHFLLDLNITRKIARLAQVGDGDVVIEVGPGPGGLTRALLETGARVIAVEKDERFRPLLQEVADAAPHLTLVFGDALTADEAALSAGRPAHLVSNLPYNVGTPLLIKWLTGPWTPASLTLMFQKEVADRITAAPGEDAYGRLAVIAQATADARPVMDVPARAFTPPPKVESAVVRLEPRAARPSPERLDALQKVTAAAFGQRRKMLRSSLKALGGEPLITAAGLDPAARAEVVPVAGFLALADAWLARREAPATAAPRGR.

Residues His-27, Leu-29, Gly-54, Glu-75, Asp-100, and Asn-120 each coordinate S-adenosyl-L-methionine.

The protein belongs to the class I-like SAM-binding methyltransferase superfamily. rRNA adenine N(6)-methyltransferase family. RsmA subfamily.

It is found in the cytoplasm. The catalysed reaction is adenosine(1518)/adenosine(1519) in 16S rRNA + 4 S-adenosyl-L-methionine = N(6)-dimethyladenosine(1518)/N(6)-dimethyladenosine(1519) in 16S rRNA + 4 S-adenosyl-L-homocysteine + 4 H(+). Specifically dimethylates two adjacent adenosines (A1518 and A1519) in the loop of a conserved hairpin near the 3'-end of 16S rRNA in the 30S particle. May play a critical role in biogenesis of 30S subunits. This is Ribosomal RNA small subunit methyltransferase A from Phenylobacterium zucineum (strain HLK1).